Reading from the N-terminus, the 109-residue chain is Nucleoid-associated protein MADE_1013280 (109 aa).

Residues 86–109 are disordered; the sequence is TSKEKMGDVTGGMPLPPGFKMPGF. Over residues 99–109 the composition is skewed to pro residues; it reads PLPPGFKMPGF.

It belongs to the YbaB/EbfC family. As to quaternary structure, homodimer.

It is found in the cytoplasm. Its subcellular location is the nucleoid. In terms of biological role, binds to DNA and alters its conformation. May be involved in regulation of gene expression, nucleoid organization and DNA protection. This is Nucleoid-associated protein MADE_1013280 from Alteromonas mediterranea (strain DSM 17117 / CIP 110805 / LMG 28347 / Deep ecotype).